A 230-amino-acid polypeptide reads, in one-letter code: Large ribosomal subunit protein uL3 (230 aa).

2 disordered regions span residues 125-149 and 210-230; these read QAIGPRSHGGGGGSKPIRQTGSLGD and PNPKNPVSLFVPNSDKEVKNE.

It belongs to the universal ribosomal protein uL3 family. Part of the 50S ribosomal subunit. Forms a cluster with proteins L14 and L19.

Functionally, one of the primary rRNA binding proteins, it binds directly near the 3'-end of the 23S rRNA, where it nucleates assembly of the 50S subunit. The protein is Large ribosomal subunit protein uL3 of Mesomycoplasma hyopneumoniae (strain J / ATCC 25934 / NCTC 10110) (Mycoplasma hyopneumoniae).